A 58-amino-acid chain; its full sequence is Putative transcript Y 13 protein (58 aa).

The chain crosses the membrane as a helical span at residues 17-37 (LLGWDLNLSLFLGLCLMLLLA).

The protein localises to the membrane. The polypeptide is Putative transcript Y 13 protein (TTTY13) (Homo sapiens (Human)).